A 315-amino-acid polypeptide reads, in one-letter code: Probable carboxylesterase 3 (315 aa).

Residue M1 is modified to N-acetylmethionine. Residues 81–83 carry the Involved in the stabilization of the negatively charged intermediate by the formation of the oxyanion hole motif; that stretch reads HGG. Active-site residues include S160, D258, and H290.

It belongs to the 'GDXG' lipolytic enzyme family. In terms of tissue distribution, expressed in flowers and siliques.

It carries out the reaction a carboxylic ester + H2O = an alcohol + a carboxylate + H(+). Carboxylesterase acting on esters with varying acyl chain length. The chain is Probable carboxylesterase 3 (CXE3) from Arabidopsis thaliana (Mouse-ear cress).